Reading from the N-terminus, the 707-residue chain is DNA-binding protein RFX2 (707 aa).

The residue at position 33 (S33) is a Phosphoserine. Positions 204–279 (HLQWLLDNYE…YHYYGIRLKP (76 aa)) form a DNA-binding region, RFX-type winged-helix. Positions 297–337 (QQPVHQKPRYRPAQKTDSLGESGSHSSLHSTPEQAMAAQSQ) are disordered. Low complexity predominate over residues 315–337 (LGESGSHSSLHSTPEQAMAAQSQ). S420 carries the post-translational modification Phosphoserine.

Belongs to the RFX family. Homodimer; probably only forms homodimers in testis. Heterodimer; heterodimerizes with RFX1 and RFX3.

It localises to the nucleus. Its subcellular location is the cytoplasm. In terms of biological role, transcription factor that acts as a key regulator of spermatogenesis. Acts by regulating expression of genes required for the haploid phase during spermiogenesis, such as genes required for cilium assembly and function. Recognizes and binds the X-box, a regulatory motif with DNA sequence 5'-GTNRCC(0-3N)RGYAAC-3' present on promoters. Probably activates transcription of the testis-specific histone gene H1-6. The polypeptide is DNA-binding protein RFX2 (RFX2) (Bos taurus (Bovine)).